A 428-amino-acid polypeptide reads, in one-letter code: Serine--tRNA ligase (428 aa).

231–233 (TAE) contacts L-serine. 262-264 (RAE) is a binding site for ATP. Glu-285 serves as a coordination point for L-serine. 349–352 (EISS) is a binding site for ATP. Ser-385 lines the L-serine pocket.

Belongs to the class-II aminoacyl-tRNA synthetase family. Type-1 seryl-tRNA synthetase subfamily. Homodimer. The tRNA molecule binds across the dimer.

It is found in the cytoplasm. The catalysed reaction is tRNA(Ser) + L-serine + ATP = L-seryl-tRNA(Ser) + AMP + diphosphate + H(+). It catalyses the reaction tRNA(Sec) + L-serine + ATP = L-seryl-tRNA(Sec) + AMP + diphosphate + H(+). It participates in aminoacyl-tRNA biosynthesis; selenocysteinyl-tRNA(Sec) biosynthesis; L-seryl-tRNA(Sec) from L-serine and tRNA(Sec): step 1/1. Catalyzes the attachment of serine to tRNA(Ser). Is also able to aminoacylate tRNA(Sec) with serine, to form the misacylated tRNA L-seryl-tRNA(Sec), which will be further converted into selenocysteinyl-tRNA(Sec). This chain is Serine--tRNA ligase, found in Methylorubrum populi (strain ATCC BAA-705 / NCIMB 13946 / BJ001) (Methylobacterium populi).